Consider the following 573-residue polypeptide: MTQISRQQYADLYGPTIGDKIRLGDSDLYVEIEKDLRATYGDELQYGGGKTLRDGMGSENFLTQEAGCLDLVITNVTVIDAIQGVVKADVGIRNGRIVGLGKAGNPSTMDGVTRGLVTGASTDAISGEHLILTAGGMDTHVHYIAPQQVEAALSNGITTLWGGGIGPVDGTNGVTTTNGPWNLEMMLRSIEGLPINFGIQGKGNSTGIAPLIEQLEAGAAGFKVHEDYGATPATIRACLSVADEYDVSVAVHTDTLNESGYVEDTIAAFDGRSVHTYHSEGAGGGHAPDLLKVVGQNNILPSSTNPTLPCGKNSVAELFDMIMVCHNLNPRIPSDVAFAESRVRAETIVAESVLHDMGAISMIGSDSQAMGRIGETYLRAIQTADAMKKARGPLPEDAPGNDNFRVLRYIAKVTINPALTAGVGDVIGSIESGKFADLVLWEPAFFGVKPKLVLKGGLVAWANMGDPNASLPTPQPMYYRPMFAAYGSALQKTSITFVSRAAYDKGVADRFGLQRLVMPVSGTRVIGKAHMVRNSYLPNIEVDPQTFAVKVDGVHATVKPPQSISLNQLYFFS.

The Urease domain maps to 135–573; it reads GGMDTHVHYI…ISLNQLYFFS (439 aa). Ni(2+)-binding residues include His140, His142, and Lys223. The residue at position 223 (Lys223) is an N6-carboxylysine. Residue His225 coordinates substrate. His252 and His278 together coordinate Ni(2+). His326 acts as the Proton donor in catalysis. Asp366 contacts Ni(2+).

It belongs to the metallo-dependent hydrolases superfamily. Urease alpha subunit family. In terms of assembly, heterotrimer of UreA (gamma), UreB (beta) and UreC (alpha) subunits. Three heterotrimers associate to form the active enzyme. Ni cation is required as a cofactor. Post-translationally, carboxylation allows a single lysine to coordinate two nickel ions.

It is found in the cytoplasm. It catalyses the reaction urea + 2 H2O + H(+) = hydrogencarbonate + 2 NH4(+). It participates in nitrogen metabolism; urea degradation; CO(2) and NH(3) from urea (urease route): step 1/1. The chain is Urease subunit alpha 2 from Brucella melitensis biotype 1 (strain ATCC 23456 / CCUG 17765 / NCTC 10094 / 16M).